Reading from the N-terminus, the 294-residue chain is Probable WRKY transcription factor 70 (294 aa).

The segment at 72 to 94 (SQNASCDNDGKFEDSGDSRKRLG) is disordered. Residues 79–91 (NDGKFEDSGDSRK) show a composition bias toward basic and acidic residues. Residues 90–97 (RKRLGPVK) carry the Nuclear localization signal motif. Positions 114–182 (IESTILEDAF…YIGNHTCNTN (69 aa)) form a DNA-binding region, WRKY. The disordered stretch occupies residues 201–229 (SEDHKSPSLSTSMKEEDNPHRHHGSSTEN).

The protein belongs to the WRKY group III family. In terms of assembly, interacts with WRKY30. Binds to BZR2/BES1 to cooperatively regulate the expression of target genes. Binds to unmodified (i.e. not sumoylated) NPR1. Post-translationally, phosphorylated and destabilized by ASK7/BIN2. As to expression, expressed in leaves and flowers.

Its subcellular location is the nucleus. Functionally, transcription factor involved in senescence, biotic and abiotic stress responses by modulating various phytohormones signaling pathways. Interacts specifically with the W box (5'-(T)TGAC[CT]-3'), a frequently occurring elicitor-responsive cis-acting element. Binds to the 5'-[CT]GACTTTT-3' motif in promoters of target genes to induce their expression. Binding to the W-box element of PR-1 promoter is mediated by not-sumoylated NPR1 in the absence of salicylic acid. Plays an important but not indispensable role in jasmonate and salicylic acid signaling. Positively regulates the salicylic acid (SA)-mediated signal pathway, but negatively the jasmonic acid (JA)-mediated signal pathway, thus determining the balance between these mutually antagonistic pathways. Together with WRKY46, WRKY53 and WRKY54, prevents defense response to the necrotrophic pathogens P.carotovorum and B.cinerea, but promotes defense responses (including SA-induced pathogenesis-related (PR) genes expression) against biotrophic/hemibiotrophic SA-monitored pathogens (e.g. P.syringae, E.carotovora subsp. carotovora SCC3193 and E.cichoracearum), probably by regulating negatively the JA/ET and positively the SA signaling pathways. Contributes to the suppression of jasmonic acid (MeJA)-induced expression of JA-responsive genes (e.g. PDF1.2). Promotes susceptibility to JA-monitored pathogens (e.g. A.brassicicola), probably by facilitating SA-controlled suppression of JA-mediated defense. Represses the biosynthesis of the phytoalexin camalexin and indol-3-ylmethyl glucosinolate (IGS). Represses both SA and JA/ethylene (ET) mediated defense marker genes expression. Negative regulator of SA biosynthesis. Negative regulator of EDS1-dependent defense against E.amylovora. Required for RPP4-mediated disease resistance and basal defense against H.parasitica, probably via late up-regulation (LURP) of resistance genes (e.g. CML10/CaBP22 and LURP1). Probably involved in defense responses toward insects (e.g. P.xylostella and B.brassicae). Together with WRKY54, negative regulator of developmental senescence, probably via the regulation of several senescence-associated markers genes. Together with WRKY46 and WRKY54, promotes brassinosteroid (BR)-regulated plant growth but prevent drought response by modulating gene expression. In collaboration with WRKY54, prevents stomatal closure and, consequently, osmotic stress tolerance. Regulates rhizobacterium B.cereus AR156-induced systemic resistance (ISR) to P.syringae pv. tomato DC3000. The protein is Probable WRKY transcription factor 70 of Arabidopsis thaliana (Mouse-ear cress).